Reading from the N-terminus, the 72-residue chain is Protein LITTLE ZIPPER 4 (72 aa).

The stretch at 14–44 forms a coiled coil; the sequence is YIIKENERLRKKAQILNQENQQLLFELKQKL. The disordered stretch occupies residues 42 to 72; sequence QKLSKTKNSSGSNQGNNNNNNNLSSSSSASG. Positions 49–72 are enriched in low complexity; sequence NSSGSNQGNNNNNNNLSSSSSASG.

As to quaternary structure, interacts with REV.

Functionally, competitive inhibitor of the HD-ZIPIII transcription factors in shoot apical meristem (SAM) development. Acts by forming non-functional heterodimers. Part of a negative feedback loop. Essential for proper functioning of stem cells in the SAM. The protein is Protein LITTLE ZIPPER 4 of Arabidopsis thaliana (Mouse-ear cress).